Here is a 153-residue protein sequence, read N- to C-terminus: Prostaglandin E synthase (153 aa).

At 1-13 (MTSLGLVMENSQV) the chain is on the lumenal side. Residues 14–42 (LPAFLLCSTLLVIKMYAVAVITGQVRLRK) form a helical membrane-spanning segment. Arginine 39 provides a ligand contact to glutathione. The Cytoplasmic segment spans residues 43–61 (KAFANPEDALKRGGLQYCR). The helical transmembrane segment at 62-91 (SDPDVERCLRAHRNDMETIYPFLFLGFVYS) threads the bilayer. Residue 74–78 (RNDME) coordinates glutathione. Residues 92 to 98 (FLGPNPL) lie on the Lumenal side of the membrane. Residues 99 to 120 (IAWIHFLVVLTGRVVHTVAYLG) form a helical membrane-spanning segment. Residues histidine 114 and tyrosine 118 each contribute to the glutathione site. At 121 to 124 (KMNP) the chain is on the cytoplasmic side. The helical transmembrane segment at 125 to 153 (RIRSGAYVLAQFACFSMALQILWEVAHHL) threads the bilayer. 127–131 (RSGAY) is a binding site for glutathione.

It belongs to the MAPEG family. The cofactor is glutathione.

It localises to the membrane. It is found in the cytoplasm. The protein localises to the perinuclear region. It catalyses the reaction prostaglandin H2 = prostaglandin E2. The enzyme catalyses 2-glyceryl-prostaglandin H2 = 2-glyceryl-prostaglandin E2. It carries out the reaction prostaglandin G2 = (15S)-15-hydroperoxy-prostaglandin E2. The catalysed reaction is 1-chloro-2,4-dinitrobenzene + glutathione = 2,4-dinitrophenyl-S-glutathione + chloride + H(+). It catalyses the reaction (5S)-hydroperoxy-(6E,8Z,11Z,14Z)-eicosatetraenoate + 2 glutathione = (5S)-hydroxy-(6E,8Z,11Z,14Z)-eicosatetraenoate + glutathione disulfide + H2O. It participates in lipid metabolism; prostaglandin biosynthesis. Its activity is regulated as follows. Activity is increased following LPS stimulation and down-regulated by the anti-inflammatory glucocorticoid dexamethasone. Terminal enzyme of the cyclooxygenase (COX)-2-mediated prostaglandin E2 (PGE2) biosynthetic pathway. Catalyzes the glutathione-dependent oxidoreduction of prostaglandin endoperoxide H2 (PGH2) to prostaglandin E2 (PGE2) in response to inflammatory stimuli. Plays a key role in inflammation response, fever and pain. Also catalyzes the oxidoreduction of endocannabinoids into prostaglandin glycerol esters and PGG2 into 15-hydroperoxy-PGE2. In addition, displays low glutathione transferase and glutathione-dependent peroxidase activities, toward 1-chloro-2,4-dinitrobenzene and 5-hydroperoxyicosatetraenoic acid (5-HPETE), respectively. The protein is Prostaglandin E synthase (Ptges) of Rattus norvegicus (Rat).